The sequence spans 449 residues: UDP-N-acetylmuramate--L-alanine ligase (449 aa).

113-119 contributes to the ATP binding site; sequence GSHGKTT.

It belongs to the MurCDEF family.

The protein resides in the cytoplasm. It catalyses the reaction UDP-N-acetyl-alpha-D-muramate + L-alanine + ATP = UDP-N-acetyl-alpha-D-muramoyl-L-alanine + ADP + phosphate + H(+). It functions in the pathway cell wall biogenesis; peptidoglycan biosynthesis. Its function is as follows. Cell wall formation. The sequence is that of UDP-N-acetylmuramate--L-alanine ligase from Hydrogenobaculum sp. (strain Y04AAS1).